The primary structure comprises 66 residues: Cell division protein ZapB (66 aa).

Residues 3–59 adopt a coiled-coil conformation; that stretch reads LELLSQLETKIQATLENIELLKMELEEEKQKSTQLAEKNQKLQQDLNSWSDKVNGLV.

It belongs to the ZapB family. In terms of assembly, homodimer. The ends of the coiled-coil dimer bind to each other, forming polymers. Interacts with FtsZ.

The protein localises to the cytoplasm. Functionally, non-essential, abundant cell division factor that is required for proper Z-ring formation. It is recruited early to the divisome by direct interaction with FtsZ, stimulating Z-ring assembly and thereby promoting cell division earlier in the cell cycle. Its recruitment to the Z-ring requires functional FtsA or ZipA. The chain is Cell division protein ZapB from Shewanella denitrificans (strain OS217 / ATCC BAA-1090 / DSM 15013).